We begin with the raw amino-acid sequence, 318 residues long: Basic leucine zipper (bZIP) transcription factor atfB (318 aa).

The interval 114 to 157 (FNSSPPEYAPPKHRSSLSEQSQTDGYGVSTRRRKASAIDQCEQQ) is disordered. The segment at 160–199 (REKREKFLERNRLAASKCRQKKKEHTKLLETRFREVSNKK) is basic motif. The 64-residue stretch at 160-223 (REKREKFLER…LNLKNEMLRH (64 aa)) folds into the bZIP domain. A leucine-zipper region spans residues 202–216 (LESEIEHLRSEVLNL). The tract at residues 275–301 (DGPMQLPSEMGSPLDQRRDSEQSIMTE) is disordered.

It belongs to the bZIP family. ATF subfamily.

It is found in the nucleus. In terms of biological role, transcription factor that acts as a key player in the regulatory circuit that integrates secondary metabolism and cellular response to oxidative stress. Regulates the genes involved in development and stress response through direct binding to their promoters. Particularly involved in the resistance to oxidative stress in asexual conidiospores. In Aspergillus oryzae (strain ATCC 42149 / RIB 40) (Yellow koji mold), this protein is Basic leucine zipper (bZIP) transcription factor atfB.